Consider the following 181-residue polypeptide: Peptidyl-prolyl cis-trans isomerase H (181 aa).

The PPIase cyclophilin-type domain occupies 17-180 (FFDIALGGVP…QDVIITQCGE (164 aa)).

The protein belongs to the cyclophilin-type PPIase family. PPIase H subfamily.

The protein resides in the nucleus. It carries out the reaction [protein]-peptidylproline (omega=180) = [protein]-peptidylproline (omega=0). In terms of biological role, PPIases accelerate the folding of proteins. It catalyzes the cis-trans isomerization of proline imidic peptide bonds in oligopeptides. The sequence is that of Peptidyl-prolyl cis-trans isomerase H (cyp3) from Aspergillus fumigatus (strain ATCC MYA-4609 / CBS 101355 / FGSC A1100 / Af293) (Neosartorya fumigata).